Reading from the N-terminus, the 561-residue chain is DNA ligase B (561 aa).

The active-site N6-AMP-lysine intermediate is the Lys125.

This sequence belongs to the NAD-dependent DNA ligase family. LigB subfamily.

The catalysed reaction is NAD(+) + (deoxyribonucleotide)n-3'-hydroxyl + 5'-phospho-(deoxyribonucleotide)m = (deoxyribonucleotide)n+m + AMP + beta-nicotinamide D-nucleotide.. Catalyzes the formation of phosphodiester linkages between 5'-phosphoryl and 3'-hydroxyl groups in double-stranded DNA using NAD as a coenzyme and as the energy source for the reaction. This chain is DNA ligase B, found in Salmonella choleraesuis (strain SC-B67).